We begin with the raw amino-acid sequence, 317 residues long: Probable cell division protein WhiA (317 aa).

Residues 267–300 (SLKELGEMLHPPVGKSGVNHRLRRLELIARQVRG) constitute a DNA-binding region (H-T-H motif).

The protein belongs to the WhiA family.

In terms of biological role, involved in cell division and chromosome segregation. This chain is Probable cell division protein WhiA, found in Moorella thermoacetica (strain ATCC 39073 / JCM 9320).